A 585-amino-acid polypeptide reads, in one-letter code: Proline--tRNA ligase (585 aa).

The protein belongs to the class-II aminoacyl-tRNA synthetase family. ProS type 1 subfamily. As to quaternary structure, homodimer.

Its subcellular location is the cytoplasm. The catalysed reaction is tRNA(Pro) + L-proline + ATP = L-prolyl-tRNA(Pro) + AMP + diphosphate. Catalyzes the attachment of proline to tRNA(Pro) in a two-step reaction: proline is first activated by ATP to form Pro-AMP and then transferred to the acceptor end of tRNA(Pro). As ProRS can inadvertently accommodate and process non-cognate amino acids such as alanine and cysteine, to avoid such errors it has two additional distinct editing activities against alanine. One activity is designated as 'pretransfer' editing and involves the tRNA(Pro)-independent hydrolysis of activated Ala-AMP. The other activity is designated 'posttransfer' editing and involves deacylation of mischarged Ala-tRNA(Pro). The misacylated Cys-tRNA(Pro) is not edited by ProRS. The polypeptide is Proline--tRNA ligase (Nocardia farcinica (strain IFM 10152)).